A 176-amino-acid polypeptide reads, in one-letter code: MPNSQAKKGLFQFYPHNLIWLGLSVLAIVLDQWTKWIASTHLNYADPVPVLPFLNWTLLHNYGAAFSFLSDAGGWQRYFFTSLAGLVSILFVFWLLRMPKKMVVLPVAIALILGGALGNLIDRITLGYVVDFIHVYYQNHHFPAFNIADSAITLGTILLLIDTFFLEKQRPKNSDA.

Transmembrane regions (helical) follow at residues 10 to 30 (LFQF…AIVL), 48 to 68 (VPVL…AFSF), 78 to 98 (YFFT…LLRM), and 102 to 122 (MVVL…NLID). Catalysis depends on residues D131 and D149. The helical transmembrane segment at 141-161 (HFPAFNIADSAITLGTILLLI) threads the bilayer.

It belongs to the peptidase A8 family.

Its subcellular location is the cell inner membrane. It catalyses the reaction Release of signal peptides from bacterial membrane prolipoproteins. Hydrolyzes -Xaa-Yaa-Zaa-|-(S,diacylglyceryl)Cys-, in which Xaa is hydrophobic (preferably Leu), and Yaa (Ala or Ser) and Zaa (Gly or Ala) have small, neutral side chains.. It functions in the pathway protein modification; lipoprotein biosynthesis (signal peptide cleavage). This protein specifically catalyzes the removal of signal peptides from prolipoproteins. The protein is Lipoprotein signal peptidase of Acinetobacter baumannii (strain ATCC 17978 / DSM 105126 / CIP 53.77 / LMG 1025 / NCDC KC755 / 5377).